A 538-amino-acid chain; its full sequence is Carboxypeptidase 2 (538 aa).

A signal peptide spans 1-21; that stretch reads MVAYRFLTLISLGLGSHCASA. An N-linked (GlcNAc...) asparagine glycan is attached at asparagine 46. Positions 53 to 76 are disordered; the sequence is PAFTSPGTVPRGFSDGTSGPTRDE. The region spanning 71 to 351 is the Peptidase M14 domain; sequence GPTRDETMEG…VMVKSILQTA (281 aa). Zn(2+) is bound by residues histidine 136, glutamate 139, and histidine 224. The Proton donor/acceptor role is filled by glutamate 322. Residues asparagine 393 and asparagine 459 are each glycosylated (N-linked (GlcNAc...) asparagine).

This sequence belongs to the peptidase M14 family. It depends on Zn(2+) as a cofactor.

It is found in the secreted. Functionally, extracellular metalloprotease that contributes to pathogenicity. The chain is Carboxypeptidase 2 (MCPB) from Trichophyton equinum (Horse ringworm fungus).